A 298-amino-acid chain; its full sequence is Protoheme IX farnesyltransferase (298 aa).

9 consecutive transmembrane segments (helical) span residues 26–46, 52–72, 93–113, 120–140, 148–168, 174–194, 219–239, 241–261, and 278–298; these read VVSL…PGAV, IFGT…NCLV, VSVP…LFML, LTMW…TVIL, IVIG…AVTG, ALLL…ALAL, LHVL…YLTQ, SGLI…YYAI, and YSIA…YFYF.

Belongs to the UbiA prenyltransferase family. Protoheme IX farnesyltransferase subfamily.

The protein resides in the cell inner membrane. The enzyme catalyses heme b + (2E,6E)-farnesyl diphosphate + H2O = Fe(II)-heme o + diphosphate. Its pathway is porphyrin-containing compound metabolism; heme O biosynthesis; heme O from protoheme: step 1/1. Converts heme B (protoheme IX) to heme O by substitution of the vinyl group on carbon 2 of heme B porphyrin ring with a hydroxyethyl farnesyl side group. The sequence is that of Protoheme IX farnesyltransferase from Nitrosomonas europaea (strain ATCC 19718 / CIP 103999 / KCTC 2705 / NBRC 14298).